A 930-amino-acid chain; its full sequence is Semaphorin-6C (930 aa).

An N-terminal signal peptide occupies residues 1–24; sequence MPRAPHFMPLLLLLLLLSLPHTQA. Topologically, residues 25 to 604 are extracellular; the sequence is AFPQDPLPLL…ASASRSVPIP (580 aa). The region spanning 30–516 is the Sema domain; sequence PLPLLISDLQ…FSGCIVYLPL (487 aa). Asparagine 70 carries N-linked (GlcNAc...) asparagine glycosylation. 4 cysteine pairs are disulfide-bonded: cysteine 111/cysteine 121, cysteine 139/cysteine 148, cysteine 262/cysteine 373, and cysteine 287/cysteine 332. N-linked (GlcNAc...) asparagine glycosylation is present at asparagine 286. Asparagine 437 is a glycosylation site (N-linked (GlcNAc...) asparagine). Intrachain disulfides connect cysteine 479–cysteine 510, cysteine 519–cysteine 537, cysteine 525–cysteine 570, and cysteine 529–cysteine 545. Residues 554 to 593 are disordered; the sequence is TDVDQAGNQESMEHGDCQDGATGSQSGPGDSAYGVRRDLP. The chain crosses the membrane as a helical span at residues 605 to 625; the sequence is LLLASVAAAFALGASVSGLLV. At 626–930 the chain is on the cytoplasmic side; that stretch reads SCACRRAHRR…AVPNGGRFNF (305 aa). 4 disordered regions span residues 654-674, 716-761, 775-882, and 908-930; these read LARL…GDAV, GDPW…PGQA, HGPQ…PGKH, and SLKP…RFNF. The span at 829–844 shows a compositional bias: low complexity; the sequence is ASAPARPALSAPAPRL.

It belongs to the semaphorin family. In terms of tissue distribution, in adult tissues, expressed only in skeletal muscle.

The protein resides in the cell membrane. In terms of biological role, shows growth cone collapsing activity on dorsal root ganglion (DRG) neurons in vitro. May be a stop signal for the DRG neurons in their target areas, and possibly also for other neurons. May also be involved in the maintenance and remodeling of neuronal connections. The polypeptide is Semaphorin-6C (SEMA6C) (Homo sapiens (Human)).